The primary structure comprises 172 residues: Large ribosomal subunit protein uL10 (172 aa).

This sequence belongs to the universal ribosomal protein uL10 family. As to quaternary structure, part of the ribosomal stalk of the 50S ribosomal subunit. The N-terminus interacts with L11 and the large rRNA to form the base of the stalk. The C-terminus forms an elongated spine to which L12 dimers bind in a sequential fashion forming a multimeric L10(L12)X complex.

Forms part of the ribosomal stalk, playing a central role in the interaction of the ribosome with GTP-bound translation factors. The chain is Large ribosomal subunit protein uL10 from Chlamydia trachomatis serovar L2 (strain ATCC VR-902B / DSM 19102 / 434/Bu).